Here is a 97-residue protein sequence, read N- to C-terminus: Co-chaperonin GroES (97 aa).

It belongs to the GroES chaperonin family. In terms of assembly, heptamer of 7 subunits arranged in a ring. Interacts with the chaperonin GroEL.

The protein localises to the cytoplasm. Together with the chaperonin GroEL, plays an essential role in assisting protein folding. The GroEL-GroES system forms a nano-cage that allows encapsulation of the non-native substrate proteins and provides a physical environment optimized to promote and accelerate protein folding. GroES binds to the apical surface of the GroEL ring, thereby capping the opening of the GroEL channel. The chain is Co-chaperonin GroES from Edwardsiella ictaluri (strain 93-146).